The following is a 110-amino-acid chain: Insulin-2 (110 aa).

A signal peptide spans 1–24; the sequence is MALWMRFLPLLALLFLWESHPTQA. Cystine bridges form between cysteine 31-cysteine 96, cysteine 43-cysteine 109, and cysteine 95-cysteine 100. Positions 57–87 are cleaved as a propeptide — c peptide; sequence EVEDPQVAQLELGGGPGAGDLQTLALEVAQQ.

Belongs to the insulin family. Heterodimer of a B chain and an A chain linked by two disulfide bonds.

The protein localises to the secreted. In terms of biological role, insulin decreases blood glucose concentration. It increases cell permeability to monosaccharides, amino acids and fatty acids. It accelerates glycolysis, the pentose phosphate cycle, and glycogen synthesis in liver. In Mus musculus (Mouse), this protein is Insulin-2 (Ins2).